The chain runs to 694 residues: MSDQEFGLDAIRNIGIMAHIDAGKTTTTERILFYAGRTHKIGEVHEGGATMDWMEQEQERGITITSAATTVFWLGAKINIIDTPGHVDFTIEVERSLRVLDGAVAVFDAVSGVEPQSETVWRQANKYGVPRIAFVNKMDRMGANYFGAVESMREKLGANAIPVHCPIGSESQFVGMVDLISQKALYFLEETLGAKWEEREIPEDLQEQCATLRMQLLEELATVDESNEAFMEKVLENPDSITEEEIHTVMRKGVIEGKINPVLCGSAFKNKGVQQLLDVIVKWLPSPLDRGNVRGINLKTGEEVSLKPSKDGPLAALAFKIMTDPYVGRITFIRIYSGTLKKGSAILNSTKDKKERISRLLEMHANERTDRDEFTVGDIGACVGLKFSVTGDTLCDENQEIVLERIEAPEPVIDMAIEPKSKGDREKLAQALSALSEEDPTFRVSTNEETGQTIISGMGELHLDILRDRMIREFRVEANVGKPQVSYKETITKTSNSETKYVKQSGGRGQYAHVCLEIEPNEPGKGNEVVSKIVGGVIPKEYIPAVIKGVEEGLNSGVLAGYGLVDVKVSIVFGSYHEVDSSEMAFKICGSMAVKEACRKALPVILEPIMKVTVITPEDHLGDVIGDLNRRRGKILGQESSRNMAQVSAEVPLSEMFGYMTSLRSLTSGRATSTMEPAFFAKVPQKIQEEIVKK.

Residues 9 to 288 (DAIRNIGIMA…VIVKWLPSPL (280 aa)) form the tr-type G domain. Residues 18 to 25 (AHIDAGKT), 82 to 86 (DTPGH), and 136 to 139 (NKMD) contribute to the GTP site.

It belongs to the TRAFAC class translation factor GTPase superfamily. Classic translation factor GTPase family. EF-G/EF-2 subfamily.

The protein localises to the cytoplasm. Its function is as follows. Catalyzes the GTP-dependent ribosomal translocation step during translation elongation. During this step, the ribosome changes from the pre-translocational (PRE) to the post-translocational (POST) state as the newly formed A-site-bound peptidyl-tRNA and P-site-bound deacylated tRNA move to the P and E sites, respectively. Catalyzes the coordinated movement of the two tRNA molecules, the mRNA and conformational changes in the ribosome. This chain is Elongation factor G, found in Chlamydia trachomatis serovar L2b (strain UCH-1/proctitis).